Reading from the N-terminus, the 121-residue chain is Large ribosomal subunit protein bL12 (121 aa).

It belongs to the bacterial ribosomal protein bL12 family. Homodimer. Part of the ribosomal stalk of the 50S ribosomal subunit. Forms a multimeric L10(L12)X complex, where L10 forms an elongated spine to which 2 to 4 L12 dimers bind in a sequential fashion. Binds GTP-bound translation factors.

Functionally, forms part of the ribosomal stalk which helps the ribosome interact with GTP-bound translation factors. Is thus essential for accurate translation. The polypeptide is Large ribosomal subunit protein bL12 (Halalkalibacterium halodurans (strain ATCC BAA-125 / DSM 18197 / FERM 7344 / JCM 9153 / C-125) (Bacillus halodurans)).